The primary structure comprises 190 residues: Frataxin homolog, mitochondrial (190 aa).

It belongs to the frataxin family. Monomer (probable predominant form). Oligomer. Interacts with IscU. Component of the mitochondrial core iron-sulfur cluster (ISC) assembly complex at least composed of the cysteine desulfurase Nfs1, the scaffold protein IscU, the accessory protein bcn92/Isd11/Lyrm4, and probably fh/frataxin.

It is found in the mitochondrion. It catalyses the reaction 4 Fe(2+) + O2 + 4 H(+) = 4 Fe(3+) + 2 H2O. In terms of biological role, promotes the biosynthesis of heme as well as the assembly and repair of iron-sulfur clusters by delivering Fe(2+) to proteins involved in these pathways. May play a role in the protection against iron-catalyzed oxidative stress through its ability to catalyze the oxidation of Fe(2+) to Fe(3+). May be able to store large amounts of the metal in the form of a ferrihydrite mineral by oligomerization. Required for ecdysteroidogenesis in the prothoracic gland which is necessary for larval to pupal transition. This chain is Frataxin homolog, mitochondrial, found in Drosophila melanogaster (Fruit fly).